The chain runs to 138 residues: ATP synthase epsilon chain (138 aa).

Belongs to the ATPase epsilon chain family. As to quaternary structure, F-type ATPases have 2 components, CF(1) - the catalytic core - and CF(0) - the membrane proton channel. CF(1) has five subunits: alpha(3), beta(3), gamma(1), delta(1), epsilon(1). CF(0) has three main subunits: a, b and c.

The protein localises to the cell membrane. Its function is as follows. Produces ATP from ADP in the presence of a proton gradient across the membrane. The chain is ATP synthase epsilon chain from Polynucleobacter asymbioticus (strain DSM 18221 / CIP 109841 / QLW-P1DMWA-1) (Polynucleobacter necessarius subsp. asymbioticus).